A 213-amino-acid polypeptide reads, in one-letter code: Large ribosomal subunit protein uL1 (213 aa).

It belongs to the universal ribosomal protein uL1 family. Part of the 50S ribosomal subunit.

Probably involved in E site tRNA release. Binds directly to 23S rRNA. Its function is as follows. Protein L1 is also a translational repressor protein, it controls the translation of the L1 operon by binding to its mRNA. Thus it also controls transcription of L10 and L12 by translational coupling. Unlike the case in E.coli, where the site is in the untranslated mRNA leader, this site is within the L1 protein's structural gene. In Methanococcus vannielii (strain ATCC 35089 / DSM 1224 / JCM 13029 / OCM 148 / SB), this protein is Large ribosomal subunit protein uL1.